The sequence spans 230 residues: MKLLILTCLVAVALARPKYPLRYPEVFQNEPDSIEEVLNKRKILELAVVSPIQFRQENIDELKDTRNEPTEDHIMEDTERKESGSSSSEEVVSSTTEQKDILKEDMPSQRYLEELHRLNKYKLLQLEAIRDQKLIPRVKLSSHPYLEQLYRINEDNHPQLGEPVKVVTQEQAYFHLEPFPQFFQLGASPYVAWYYPPQVMQYIAHPSSYDTPEGIASEDGGKTDVMPQWW.

An N-terminal signal peptide occupies residues 1-15 (MKLLILTCLVAVALA). 6 positions are modified to phosphoserine: Ser33, Ser83, Ser85, Ser86, Ser87, and Ser88. A compositionally biased stretch (basic and acidic residues) spans 60–83 (DELKDTRNEPTEDHIMEDTERKES). Disordered regions lie at residues 60–103 (DELK…DILK) and 211–230 (TPEGIASEDGGKTDVMPQWW). Over residues 84 to 96 (GSSSSEEVVSSTT) the composition is skewed to low complexity.

It belongs to the alpha-casein family. Mammary gland specific. Secreted in milk.

The protein resides in the secreted. Functionally, important role in the capacity of milk to transport calcium phosphate. This is Alpha-S1-casein (CSN1S1) from Camelus dromedarius (Dromedary).